The chain runs to 433 residues: sn-glycerol-3-phosphate-binding periplasmic protein UgpB (433 aa).

The N-terminal stretch at 1-25 is a signal peptide; sequence MFTRLITTSVLTGAIALTIGSQAFA. Residues Tyr-67, Asp-91, Ser-146, Ser-273, Gly-307, Tyr-346, and Arg-397 each contribute to the sn-glycerol 3-phosphate site.

The protein belongs to the bacterial solute-binding protein 1 family. As to quaternary structure, the complex is composed of two ATP-binding proteins (UgpC), two transmembrane proteins (UgpA and UgpE) and a solute-binding protein (UgpB).

The protein resides in the periplasm. Part of the ABC transporter complex UgpBAEC involved in sn-glycerol-3-phosphate (G3P) import. Binds G3P. This is sn-glycerol-3-phosphate-binding periplasmic protein UgpB (ugpB) from Brucella abortus (strain 2308).